Here is a 304-residue protein sequence, read N- to C-terminus: Thymidylate synthase (304 aa).

Residues Arg-30 and 157 to 158 (RR) each bind dUMP. Cys-177 functions as the Nucleophile in the catalytic mechanism. Residues 206 to 209 (RSCD), Asn-217, and 247 to 249 (HVY) contribute to the dUMP site. Position 209 (Asp-209) interacts with (6R)-5,10-methylene-5,6,7,8-tetrahydrofolate.

This sequence belongs to the thymidylate synthase family. Homodimer.

The protein resides in the nucleus. The catalysed reaction is dUMP + (6R)-5,10-methylene-5,6,7,8-tetrahydrofolate = 7,8-dihydrofolate + dTMP. Its pathway is pyrimidine metabolism; dTTP biosynthesis. With respect to regulation, inhibited by 5-fluoro-2'-deoxyuridine 5'-monophosphate (FdUMP). Functionally, thymidylate synthase required for de novo biosynthesis of pyrimidine deoxyribonucleotides. Required for both nuclear and mitochondrial DNA synthesis. In Saccharomyces cerevisiae (strain ATCC 204508 / S288c) (Baker's yeast), this protein is Thymidylate synthase (CDC21).